The chain runs to 228 residues: D-lyxose/D-mannose isomerase (228 aa).

Residues His-103, His-105, Glu-110, and His-171 each contribute to the Mn(2+) site.

Belongs to the D-lyxose ketol-isomerase family. Homodimer. Requires Mn(2+) as cofactor.

It carries out the reaction D-lyxose = D-xylulose. The enzyme catalyses D-mannose = D-fructose. In terms of biological role, sugar isomerase that catalyzes the reversible isomerization of D-lyxose to D-xylulose, and D-mannose to D-fructose. Shows optimum activity using D-lyxose as substrate, but can also effectively catalyze the isomerization between D-fructose and D-mannose. Shows lower activity with L-gulose, D-talose and L-ribose. In Serratia proteamaculans, this protein is D-lyxose/D-mannose isomerase.